Here is a 269-residue protein sequence, read N- to C-terminus: Tryptophan synthase alpha chain (269 aa).

Residues Glu49 and Asp60 each act as proton acceptor in the active site.

This sequence belongs to the TrpA family. Tetramer of two alpha and two beta chains.

The catalysed reaction is (1S,2R)-1-C-(indol-3-yl)glycerol 3-phosphate + L-serine = D-glyceraldehyde 3-phosphate + L-tryptophan + H2O. Its pathway is amino-acid biosynthesis; L-tryptophan biosynthesis; L-tryptophan from chorismate: step 5/5. Its function is as follows. The alpha subunit is responsible for the aldol cleavage of indoleglycerol phosphate to indole and glyceraldehyde 3-phosphate. This chain is Tryptophan synthase alpha chain, found in Salmonella arizonae (strain ATCC BAA-731 / CDC346-86 / RSK2980).